Reading from the N-terminus, the 443-residue chain is Amino-acid acetyltransferase (443 aa).

The N-acetyltransferase domain occupies 296 to 434 (EQIRRATIND…KKLMYNYQRR (139 aa)).

It belongs to the acetyltransferase family. ArgA subfamily. As to quaternary structure, homohexamer.

Its subcellular location is the cytoplasm. It carries out the reaction L-glutamate + acetyl-CoA = N-acetyl-L-glutamate + CoA + H(+). It functions in the pathway amino-acid biosynthesis; L-arginine biosynthesis; N(2)-acetyl-L-ornithine from L-glutamate: step 1/4. This is Amino-acid acetyltransferase from Escherichia fergusonii (strain ATCC 35469 / DSM 13698 / CCUG 18766 / IAM 14443 / JCM 21226 / LMG 7866 / NBRC 102419 / NCTC 12128 / CDC 0568-73).